The primary structure comprises 234 residues: MAHVAKKYKAAAEKVDRAKRYKLDEAMSLVKQTATKKFDETVDASINLGVDPKHADQVVRGAVVLPHGMGKTVRLAVFAKGDKAKEAQEAGADIVGAEDLAEKIQGGFMDFDKLIATPDMMGVVGRLGKILGPRGLMPNPKVGTVTMDLARAVKEQKAGKVEFRVEKAGIVHVPFGKASFDPEKLKANFSAIMEVIYKAKPQTAKGVYVKNVTLSTTMGPGIKLDLAELAAQHA.

The protein belongs to the universal ribosomal protein uL1 family. In terms of assembly, part of the 50S ribosomal subunit.

Binds directly to 23S rRNA. The L1 stalk is quite mobile in the ribosome, and is involved in E site tRNA release. Functionally, protein L1 is also a translational repressor protein, it controls the translation of the L11 operon by binding to its mRNA. The chain is Large ribosomal subunit protein uL1 from Anaeromyxobacter dehalogenans (strain 2CP-C).